The sequence spans 344 residues: AI-2 transport protein TqsA (344 aa).

Residues 1–4 (MAKP) lie on the Cytoplasmic side of the membrane. A helical membrane pass occupies residues 5–25 (IITLNGLKIVIMLGMLVIILC). Topologically, residues 26–30 (GIRFA) are periplasmic. A helical transmembrane segment spans residues 31 to 51 (AEIIVPFILALFIAVILNPLV). Residues 52–61 (QHMVRWRVPR) are Cytoplasmic-facing. Residues 62–82 (VLAVSILMTIIVMAMVLLLAY) form a helical membrane-spanning segment. The Periplasmic portion of the chain corresponds to 83 to 149 (LGSALNELTR…LLTQLSNAMS (67 aa)). A helical transmembrane segment spans residues 150–170 (SIFLLLLTVLFMLLEVPQLPG). At 171–196 (KFQQMMARPVEGMAAIQRAIDSVSHY) the chain is on the cytoplasmic side. Residues 197-217 (LVLKTAISIITGLVAWAMLAA) form a helical membrane-spanning segment. Topologically, residues 218 to 221 (LDVR) are periplasmic. Residues 222-242 (FAFVWGLLAFALNYIPNIGSV) traverse the membrane as a helical segment. Residues 243 to 257 (LAAIPPIAQVLVFNG) are Cytoplasmic-facing. A helical transmembrane segment spans residues 258 to 278 (FYEALLVLAGYLLINLVFGNI). Topologically, residues 279 to 292 (LEPRIMGRGLGLST) are periplasmic. A helical transmembrane segment spans residues 293–313 (LVVFLSLIFWGWLLGPVGMLL). Residues 314-344 (SVPLTIIVKIALEQTAGGQSIAVLLSDLNKE) are Cytoplasmic-facing.

Belongs to the autoinducer-2 exporter (AI-2E) (TC 2.A.86) family.

It is found in the cell inner membrane. The enzyme catalyses (2R,4S)-2-methyltetrahydrofuran-2,3,3,4-tetrol(in) = (2R,4S)-2-methyltetrahydrofuran-2,3,3,4-tetrol(out). In terms of biological role, involved in the transport of the quorum-sensing signal autoinducer 2 (AI-2). Controls the transport of AI-2 either by enhancing its secretion or inhibiting its uptake and consequently represses biofilm formation and motility and affects the global gene expression in biofilms. This Escherichia coli (strain K12) protein is AI-2 transport protein TqsA.